Reading from the N-terminus, the 348-residue chain is Protein pelota homolog (348 aa).

It belongs to the eukaryotic release factor 1 family. Pelota subfamily. Monomer. Requires a divalent metal cation as cofactor.

It is found in the cytoplasm. Its function is as follows. May function in recognizing stalled ribosomes, interact with stem-loop structures in stalled mRNA molecules, and effect endonucleolytic cleavage of the mRNA. May play a role in the release non-functional ribosomes and degradation of damaged mRNAs. Has endoribonuclease activity. The polypeptide is Protein pelota homolog (Methanococcus maripaludis (strain C6 / ATCC BAA-1332)).